Reading from the N-terminus, the 673-residue chain is Bifunctional lycopene cyclase/phytoene synthase (673 aa).

Positions M1–H251 are lycopene beta-cyclase. 7 consecutive transmembrane segments (helical) span residues I9–L29, K36–I56, Y81–A101, S117–A137, L157–F177, T187–G207, and V226–L246. A phytoene synthase region spans residues L258 to Q673. The disordered stretch occupies residues K376–P399.

It in the N-terminal section; belongs to the lycopene beta-cyclase family. The protein in the C-terminal section; belongs to the phytoene/squalene synthase family.

It localises to the membrane. It carries out the reaction all-trans-lycopene = gamma-carotene. It catalyses the reaction gamma-carotene = all-trans-beta-carotene. The catalysed reaction is 2 (2E,6E,10E)-geranylgeranyl diphosphate = 15-cis-phytoene + 2 diphosphate. It participates in carotenoid biosynthesis; beta-carotene biosynthesis. The protein operates within carotenoid biosynthesis; phytoene biosynthesis; all-trans-phytoene from geranylgeranyl diphosphate: step 1/1. Its function is as follows. Bifunctional enzyme that catalyzes the reactions from geranylgeranyl diphosphate to phytoene (phytoene synthase) and lycopene to beta-carotene via the intermediate gamma-carotene (lycopene cyclase). The cyclase preferentially catalyzes the symmetric cyclization of both ends of the substrate to produce dicyclic carotenoids. Beta-carotene is further processed to the acidic carotenoid astaxanthin. The polypeptide is Bifunctional lycopene cyclase/phytoene synthase (Phaffia rhodozyma (Yeast)).